A 376-amino-acid polypeptide reads, in one-letter code: 3-dehydroquinate synthase (376 aa).

NAD(+) contacts are provided by residues 115–119, 139–140, Lys-152, and Lys-161; these read GVIGD and TS. Zn(2+) is bound by residues Glu-194, His-256, and His-275.

It belongs to the sugar phosphate cyclases superfamily. Dehydroquinate synthase family. The cofactor is Co(2+). Zn(2+) is required as a cofactor. It depends on NAD(+) as a cofactor.

The protein resides in the cytoplasm. The catalysed reaction is 7-phospho-2-dehydro-3-deoxy-D-arabino-heptonate = 3-dehydroquinate + phosphate. It participates in metabolic intermediate biosynthesis; chorismate biosynthesis; chorismate from D-erythrose 4-phosphate and phosphoenolpyruvate: step 2/7. Catalyzes the conversion of 3-deoxy-D-arabino-heptulosonate 7-phosphate (DAHP) to dehydroquinate (DHQ). The polypeptide is 3-dehydroquinate synthase (Rhizobium leguminosarum bv. trifolii (strain WSM2304)).